The chain runs to 659 residues: 4-alpha-glucanotransferase (659 aa).

Residue Glu-123 is the Nucleophile of the active site. Catalysis depends on Asp-214, which acts as the Proton donor.

This sequence belongs to the glycosyl hydrolase 57 family. In terms of assembly, homodimer.

It carries out the reaction Transfers a segment of a (1-&gt;4)-alpha-D-glucan to a new position in an acceptor, which may be glucose or a (1-&gt;4)-alpha-D-glucan.. Inhibited by p-chloromercuribenzoic acid, monoiodoacetic acid, mercury and nickel ions. Its function is as follows. Catalyzes the transglycosylation of maltooligosaccharides, yielding maltooligosaccharides of various lengths and glucose. Maltose and glucose can be used as acceptors in the transfer reaction. This chain is 4-alpha-glucanotransferase (jgt), found in Thermococcus litoralis (strain ATCC 51850 / DSM 5473 / JCM 8560 / NS-C).